A 310-amino-acid chain; its full sequence is Probable manganese-dependent inorganic pyrophosphatase (310 aa).

Residues H9, D13, D15, D75, H97, and D149 each contribute to the Mn(2+) site.

Belongs to the PPase class C family. Requires Mn(2+) as cofactor.

Its subcellular location is the cytoplasm. The enzyme catalyses diphosphate + H2O = 2 phosphate + H(+). The sequence is that of Probable manganese-dependent inorganic pyrophosphatase from Brevibacillus brevis (strain 47 / JCM 6285 / NBRC 100599).